We begin with the raw amino-acid sequence, 203 residues long: Formate hydrogenlyase subunit 2 (203 aa).

4Fe-4S ferredoxin-type domains are found at residues 2–32, 42–72, 73–102, and 137–169; these read NRFV…HGLQ, NEKE…TRVD, GAVQ…FSGS, and RAIA…LVDN. [4Fe-4S] cluster-binding residues include Cys-12, Cys-15, Cys-18, Cys-22, Cys-51, Cys-54, Cys-59, Cys-63, Cys-82, Cys-85, Cys-88, Cys-92, Cys-143, Cys-146, Cys-155, and Cys-159.

FHL comprises of a formate dehydrogenase, unidentified electron carriers and a hydrogenase (isoenzyme 3). In this non-energy conserving pathway, molecular hydrogen and carbodioxide are released from formate. The cofactor is [4Fe-4S] cluster.

In terms of biological role, probable electron transfer protein for hydrogenase 3. This chain is Formate hydrogenlyase subunit 2 (hycB), found in Escherichia coli (strain K12).